Consider the following 497-residue polypeptide: G protein-coupled receptor gprM (497 aa).

A glycan (N-linked (GlcNAc...) asparagine) is linked at Asn3. 5 helical membrane passes run 66 to 86 (ISVAILPLCIFLLVSYAVLPV), 98 to 118 (FTLGICFMEASKIAFIIPLGV), 138 to 158 (CAFTGSLLLLGGWMVVVWSFL), 179 to 199 (WGALIFGWVVPAVGLTVMLIL), and 221 to 241 (YWIPIISFAVAALILQLATMA). The N-linked (GlcNAc...) asparagine glycan is linked to Asn259. Transmembrane regions (helical) follow at residues 293-313 (VTLVLIIIANVIFFSVTFIEL) and 357-377 (LLLAVLVLLSLVGFWNFILFA). The N-linked (GlcNAc...) asparagine glycan is linked to Asn421. Positions 428–497 (YKSPSPMVRS…APAVYREYDD (70 aa)) are disordered.

The protein belongs to the G-protein coupled receptor GPR1/git3 family. As to quaternary structure, interacts with gpaA.

It localises to the cell membrane. Functionally, g protein-coupled receptor that plays a role in conidiation and regulation of the biosynthesis of secondary metabolites such as dihydroxynaphthalene (DHN)-melanin, via interaction with the G-protein complex alpha subunit gpaA. In Aspergillus fumigatus (strain CBS 144.89 / FGSC A1163 / CEA10) (Neosartorya fumigata), this protein is G protein-coupled receptor gprM.